Here is a 236-residue protein sequence, read N- to C-terminus: Small ribosomal subunit protein uS2c (236 aa).

The protein belongs to the universal ribosomal protein uS2 family.

The protein resides in the plastid. It localises to the chloroplast. This is Small ribosomal subunit protein uS2c (rps2) from Citrus sinensis (Sweet orange).